The primary structure comprises 377 residues: Spermidine/putrescine import ATP-binding protein PotA (377 aa).

The ABC transporter domain maps to 18–248; that stretch reads IRLSGISKSF…PKNLFVARFI (231 aa). Residue 50-57 participates in ATP binding; that stretch reads GPSGCGKT.

The protein belongs to the ABC transporter superfamily. Spermidine/putrescine importer (TC 3.A.1.11.1) family. As to quaternary structure, the complex is composed of two ATP-binding proteins (PotA), two transmembrane proteins (PotB and PotC) and a solute-binding protein (PotD).

The protein localises to the cell inner membrane. The catalysed reaction is ATP + H2O + polyamine-[polyamine-binding protein]Side 1 = ADP + phosphate + polyamineSide 2 + [polyamine-binding protein]Side 1.. Functionally, part of the ABC transporter complex PotABCD involved in spermidine/putrescine import. Responsible for energy coupling to the transport system. In Vibrio parahaemolyticus serotype O3:K6 (strain RIMD 2210633), this protein is Spermidine/putrescine import ATP-binding protein PotA.